A 308-amino-acid polypeptide reads, in one-letter code: MLLLQSILITKIMVIQLILFFEYALASGFEDKNILKEGKMMFDTLLKQFLEIDKVISLLYKDFVDNYIDFKNLEIVKIKKENEIENKLKSLLKSENIDYALVVAPEDEDILYNLTKIIESYPVKNLGCSSEAIKIAGNKYLTYLAIKDAVKTPKTFPPKKYVVKKIDSCGGKFNLFDENFLIQEFIDGENLSVSLIVGKKIHPLSLNRQYIDKRGFVGGEVNINHKLKDKIFNEAIKAVKCINGLNGYVGVDVIVNNDGIYIIEINPRITTTIYGLKTNPSLAELLIKNANNEELKFKVKGEKFTIDK.

One can recognise an ATP-grasp domain in the interval 89–291 (KSLLKSENID…LAELLIKNAN (203 aa)). 115–192 (TKIIESYPVK…QEFIDGENLS (78 aa)) is an ATP binding site. Positions 252, 264, and 266 each coordinate Mg(2+). Asp-252, Glu-264, and Asn-266 together coordinate Mn(2+).

Mg(2+) serves as cofactor. It depends on Mn(2+) as a cofactor.

It catalyses the reaction tyramine + L-glutamate + ATP = gamma-L-glutamyltyramine + ADP + phosphate + H(+). Its pathway is cofactor biosynthesis; methanofuran biosynthesis. In terms of biological role, catalyzes the formation of an amide bond between tyramine and the gamma carboxy group of L-glutamate. The enzyme also accepts phenylethylamine in vitro. This chain is Tyramine--L-glutamate ligase (mfnD), found in Methanocaldococcus jannaschii (strain ATCC 43067 / DSM 2661 / JAL-1 / JCM 10045 / NBRC 100440) (Methanococcus jannaschii).